Consider the following 228-residue polypeptide: Ribose-5-phosphate isomerase A (228 aa).

Substrate contacts are provided by residues 28 to 31, 84 to 87, and 97 to 100; these read TGST, DGAD, and KGGG. The active-site Proton acceptor is glutamate 106. Position 124 (lysine 124) interacts with substrate.

It belongs to the ribose 5-phosphate isomerase family. Homodimer.

The enzyme catalyses aldehydo-D-ribose 5-phosphate = D-ribulose 5-phosphate. The protein operates within carbohydrate degradation; pentose phosphate pathway; D-ribose 5-phosphate from D-ribulose 5-phosphate (non-oxidative stage): step 1/1. Functionally, catalyzes the reversible conversion of ribose-5-phosphate to ribulose 5-phosphate. In Levilactobacillus brevis (strain ATCC 367 / BCRC 12310 / CIP 105137 / JCM 1170 / LMG 11437 / NCIMB 947 / NCTC 947) (Lactobacillus brevis), this protein is Ribose-5-phosphate isomerase A.